The following is a 197-amino-acid chain: Rac-like GTP-binding protein ARAC6 (197 aa).

Residue 13-20 (GDGAVGKT) participates in GTP binding. Residues 35-43 (YVPTVFDNF) carry the Effector region motif. GTP is bound by residues 60 to 64 (DTAGQ) and 118 to 121 (TKLD). GDP is bound at residue serine 160. Cysteine 194 is subject to Cysteine methyl ester. Cysteine 194 is lipidated: S-geranylgeranyl cysteine. Positions 195–197 (SIL) are cleaved as a propeptide — removed in mature form.

This sequence belongs to the small GTPase superfamily. Rho family. As to quaternary structure, interacts with SPK1. In terms of tissue distribution, ubiquitous. Preferentially expressed in mature pollen and pollen tubes.

The protein resides in the cytoplasm. The protein localises to the membrane. May be involved in cell polarity control during the actin-dependent tip growth of pollen tubes. In terms of biological role, inactive GDP-bound Rho GTPases reside in the cytosol, are found in a complex with Rho GDP-dissociation inhibitors (Rho GDIs), and are released from the GDI protein in order to translocate to membranes upon activation. This is Rac-like GTP-binding protein ARAC6 (ARAC6) from Arabidopsis thaliana (Mouse-ear cress).